The primary structure comprises 636 residues: 1-deoxy-D-xylulose-5-phosphate synthase (636 aa).

Residues histidine 74 and 115-117 (GHA) contribute to the thiamine diphosphate site. Aspartate 146 provides a ligand contact to Mg(2+). Residues 147-148 (GA), asparagine 175, tyrosine 285, and glutamate 368 contribute to the thiamine diphosphate site. Asparagine 175 is a binding site for Mg(2+).

This sequence belongs to the transketolase family. DXPS subfamily. In terms of assembly, homodimer. Mg(2+) is required as a cofactor. It depends on thiamine diphosphate as a cofactor.

It carries out the reaction D-glyceraldehyde 3-phosphate + pyruvate + H(+) = 1-deoxy-D-xylulose 5-phosphate + CO2. It participates in metabolic intermediate biosynthesis; 1-deoxy-D-xylulose 5-phosphate biosynthesis; 1-deoxy-D-xylulose 5-phosphate from D-glyceraldehyde 3-phosphate and pyruvate: step 1/1. Functionally, catalyzes the acyloin condensation reaction between C atoms 2 and 3 of pyruvate and glyceraldehyde 3-phosphate to yield 1-deoxy-D-xylulose-5-phosphate (DXP). The chain is 1-deoxy-D-xylulose-5-phosphate synthase from Anaeromyxobacter dehalogenans (strain 2CP-C).